The chain runs to 318 residues: tRNA-cytidine(32) 2-sulfurtransferase (318 aa).

A PP-loop motif motif is present at residues 65–70 (SGGKDS). [4Fe-4S] cluster is bound by residues cysteine 140, cysteine 143, and cysteine 231.

It belongs to the TtcA family. In terms of assembly, homodimer. The cofactor is Mg(2+). Requires [4Fe-4S] cluster as cofactor.

The protein localises to the cytoplasm. It catalyses the reaction cytidine(32) in tRNA + S-sulfanyl-L-cysteinyl-[cysteine desulfurase] + AH2 + ATP = 2-thiocytidine(32) in tRNA + L-cysteinyl-[cysteine desulfurase] + A + AMP + diphosphate + H(+). It participates in tRNA modification. In terms of biological role, catalyzes the ATP-dependent 2-thiolation of cytidine in position 32 of tRNA, to form 2-thiocytidine (s(2)C32). The sulfur atoms are provided by the cysteine/cysteine desulfurase (IscS) system. In Herminiimonas arsenicoxydans, this protein is tRNA-cytidine(32) 2-sulfurtransferase.